The sequence spans 174 residues: Alpha-crystallin B chain (174 aa).

Methionine 1 carries the N-acetylmethionine modification. Residues arginine 55–glutamate 163 form the sHSP domain. Positions 82, 103, 105, and 110 each coordinate Zn(2+). Residues arginine 148–lysine 174 form a disordered region. The span at lysine 149–proline 166 shows a compositional bias: basic and acidic residues.

The protein belongs to the small heat shock protein (HSP20) family. As to quaternary structure, heteromer composed of three CRYAA and one CRYAB subunits. Aggregates with homologous proteins, including the small heat shock protein HSPB1, to form large heteromeric complexes. Inter-subunit bridging via zinc ions enhances stability, which is crucial as there is no protein turn over in the lens. Lens as well as other tissues.

In terms of biological role, may contribute to the transparency and refractive index of the lens. The polypeptide is Alpha-crystallin B chain (CRYAB) (Anas platyrhynchos (Mallard)).